The primary structure comprises 162 residues: NADH-quinone oxidoreductase subunit I 2 (162 aa).

4Fe-4S ferredoxin-type domains follow at residues 52 to 82 and 93 to 122; these read LRRY…IEAG and VRYD…EGPN. Residues C62, C65, C68, C72, C102, C105, C108, and C112 each contribute to the [4Fe-4S] cluster site.

It belongs to the complex I 23 kDa subunit family. NDH-1 is composed of 14 different subunits. Subunits NuoA, H, J, K, L, M, N constitute the membrane sector of the complex. [4Fe-4S] cluster serves as cofactor.

The protein localises to the cell inner membrane. The catalysed reaction is a quinone + NADH + 5 H(+)(in) = a quinol + NAD(+) + 4 H(+)(out). Its function is as follows. NDH-1 shuttles electrons from NADH, via FMN and iron-sulfur (Fe-S) centers, to quinones in the respiratory chain. The immediate electron acceptor for the enzyme in this species is believed to be ubiquinone. Couples the redox reaction to proton translocation (for every two electrons transferred, four hydrogen ions are translocated across the cytoplasmic membrane), and thus conserves the redox energy in a proton gradient. This is NADH-quinone oxidoreductase subunit I 2 from Rhodopseudomonas palustris (strain HaA2).